Consider the following 145-residue polypeptide: Small ribosomal subunit protein bS16 (145 aa).

A disordered region spans residues 82 to 145 (IKERAATNNP…EAAAEEQTEA (64 aa)). Over residues 95–115 (EPGKKAKERAEERAEKAREAA) the composition is skewed to basic and acidic residues. The segment covering 116–137 (EAAAAAAAAPAEEAAAEAPAEA) has biased composition (low complexity).

The protein belongs to the bacterial ribosomal protein bS16 family.

The protein is Small ribosomal subunit protein bS16 of Novosphingobium aromaticivorans (strain ATCC 700278 / DSM 12444 / CCUG 56034 / CIP 105152 / NBRC 16084 / F199).